The primary structure comprises 253 residues: Triosephosphate isomerase (253 aa).

9 to 11 (NWK) provides a ligand contact to substrate. The Electrophile role is filled by His95. The active-site Proton acceptor is Glu167. Substrate is bound by residues Gly173, Ser213, and 234–235 (GG). Ser213 carries the post-translational modification Phosphoserine.

It belongs to the triosephosphate isomerase family. Homodimer.

It is found in the cytoplasm. It carries out the reaction D-glyceraldehyde 3-phosphate = dihydroxyacetone phosphate. It participates in carbohydrate biosynthesis; gluconeogenesis. It functions in the pathway carbohydrate degradation; glycolysis; D-glyceraldehyde 3-phosphate from glycerone phosphate: step 1/1. Functionally, involved in the gluconeogenesis. Catalyzes stereospecifically the conversion of dihydroxyacetone phosphate (DHAP) to D-glyceraldehyde-3-phosphate (G3P). The protein is Triosephosphate isomerase of Bacillus pumilus (strain SAFR-032).